The chain runs to 590 residues: Zinc finger protein 285 (590 aa).

The 79-residue stretch at 8–86 (VTFKDVAVVF…WKQRIRDLTV (79 aa)) folds into the KRAB domain. The C2H2-type 1 zinc finger occupies 232–254 (FPCNNCGVAFADDTDPHVHHSTH). The C2H2-type 2; degenerate zinc finger occupies 260–282 (YKCDQYGKNFSQSQDLIVHCKTH). 9 consecutive C2H2-type zinc fingers follow at residues 316 to 338 (YKCK…HRVH), 344 to 366 (YKCD…QGVH), 372 to 394 (YKCE…QRVH), 400 to 422 (YKCS…WRFH), 428 to 450 (YRCG…QRVH), 456 to 478 (YKCN…QRVH), 484 to 506 (YKCE…QRDH), 512 to 534 (YKCD…LRVH), and 540 to 562 (YKCK…QRVH).

It belongs to the krueppel C2H2-type zinc-finger protein family.

The protein resides in the nucleus. May be involved in transcriptional regulation. The polypeptide is Zinc finger protein 285 (ZNF285) (Homo sapiens (Human)).